The sequence spans 261 residues: tRNA threonylcarbamoyladenosine dehydratase (261 aa).

Residues 230–250 form a helical membrane-spanning segment; the sequence is CANGFGAATMITATFGFFAVS.

This sequence belongs to the HesA/MoeB/ThiF family.

It localises to the membrane. Catalyzes the ATP-dependent dehydration of threonylcarbamoyladenosine at position 37 (t(6)A37) to form cyclic t(6)A37 (ct(6)A37) in tRNAs that read codons beginning with adenine. The polypeptide is tRNA threonylcarbamoyladenosine dehydratase (tcdA) (Haemophilus influenzae (strain ATCC 51907 / DSM 11121 / KW20 / Rd)).